The following is an 824-amino-acid chain: Ent-copalyl diphosphate synthase AN1, chloroplastic (824 aa).

The N-terminal 63 residues, 1-63 (MPYPHPYPWQ…SSAKVFQTSR (63 aa)), are a transit peptide targeting the chloroplast. A disordered region spans residues 1-87 (MPYPHPYPWQ…QDLEDEHQAE (87 aa)). Polar residues predominate over residues 44 to 63 (ATTTQQPDNVSSAKVFQTSR). Lys-247 serves as a coordination point for substrate. Mg(2+) contacts are provided by Asp-379 and Asp-381. A DXDD motif motif is present at residues 379–382 (DVDD). Lys-465 provides a ligand contact to substrate.

It belongs to the terpene synthase family. Tpsc subfamily. The cofactor is Mg(2+).

It localises to the plastid. It is found in the chloroplast. It carries out the reaction (2E,6E,10E)-geranylgeranyl diphosphate = ent-copalyl diphosphate. It functions in the pathway plant hormone biosynthesis; gibberellin biosynthesis. Involved in giberellin biosynthesis. Catalyzes the conversion of geranylgeranyl diphosphate to the gibberellin precursor ent-copalyl diphosphate. This is Ent-copalyl diphosphate synthase AN1, chloroplastic from Zea mays (Maize).